Consider the following 230-residue polypeptide: MAKTSKRYREIVQKIDRSQLYSLVDALALVKETAVAKFDESVDIAINLGIDVRKSDQVVRGSVVLPSGTGKSVRVAVFAQGDKAKEALDAGADIVGFEDLAERVKAGEINFDLAIASPDAMRVVGQLGQILGPRGLMPNPKVGTVTVDVINAIRNAKAGQVQFRADKAGIVHCTVGRASFDVEALRANIMALVDALNKSKPTTSKGVYLRKMAISSTMGVGVRVDHTAIV.

The protein belongs to the universal ribosomal protein uL1 family. Part of the 50S ribosomal subunit.

Binds directly to 23S rRNA. The L1 stalk is quite mobile in the ribosome, and is involved in E site tRNA release. Functionally, protein L1 is also a translational repressor protein, it controls the translation of the L11 operon by binding to its mRNA. In Nitrosomonas europaea (strain ATCC 19718 / CIP 103999 / KCTC 2705 / NBRC 14298), this protein is Large ribosomal subunit protein uL1.